The primary structure comprises 777 residues: Beta-hexosaminidase (777 aa).

Residues 1 to 18 form the signal peptide; that stretch reads MKRLTFGACICCLLSLMA. Residue Cys19 is the site of N-palmitoyl cysteine attachment. Cys19 carries the S-diacylglycerol cysteine lipid modification. Positions 625–766 constitute a PA14 domain; that stretch reads APKPGLTIRT…VMIRLKGEEK (142 aa).

The protein belongs to the glycosyl hydrolase 20 family.

It is found in the cell outer membrane. The enzyme catalyses Hydrolysis of terminal non-reducing N-acetyl-D-hexosamine residues in N-acetyl-beta-D-hexosaminides.. The sequence is that of Beta-hexosaminidase (nahA) from Porphyromonas gingivalis (strain ATCC BAA-308 / W83).